Reading from the N-terminus, the 205-residue chain is Nucleoside triphosphate pyrophosphatase (205 aa).

The active-site Proton acceptor is D76.

This sequence belongs to the Maf family. A divalent metal cation serves as cofactor.

The protein resides in the cytoplasm. The catalysed reaction is a ribonucleoside 5'-triphosphate + H2O = a ribonucleoside 5'-phosphate + diphosphate + H(+). It catalyses the reaction a 2'-deoxyribonucleoside 5'-triphosphate + H2O = a 2'-deoxyribonucleoside 5'-phosphate + diphosphate + H(+). Nucleoside triphosphate pyrophosphatase. May have a dual role in cell division arrest and in preventing the incorporation of modified nucleotides into cellular nucleic acids. This chain is Nucleoside triphosphate pyrophosphatase, found in Orientia tsutsugamushi (strain Boryong) (Rickettsia tsutsugamushi).